A 290-amino-acid polypeptide reads, in one-letter code: Homeobox protein HMX3-B (290 aa).

Disordered regions lie at residues 1–41 (MADS…GSSK) and 96–169 (EKVN…KKKT). Residues 107–124 (LDRHTPDPPKSDQESKEE) show a composition bias toward basic and acidic residues. Residues 125 to 137 (SADDEIALEESDA) are compositionally biased toward acidic residues. A compositionally biased stretch (basic and acidic residues) spans 138 to 162 (EEPKKETDQEDDWMRKGEDLESDKK). Residues 166–225 (KKKTRTVFSRSQVFQLESTFDIKRYLSSSERAGLAASLHLTETQVKIWFQNRRNKWKRQL) constitute a DNA-binding region (homeobox).

This sequence belongs to the HMX homeobox family. As to expression, expressed in the ear placode and vesicle and in cells forming the vestibulo-acoustic ganglion.

The protein resides in the nucleus. Transcription factor involved in specification of neuronal cell types and which is required for inner ear and hypothalamus development. Binds to the 5'-CAAGTG-3' core sequence. The polypeptide is Homeobox protein HMX3-B (hmx3b) (Oryzias latipes (Japanese rice fish)).